The sequence spans 373 residues: Ferroptosis suppressor protein 1 (373 aa).

Gly-2 is lipidated: N-myristoyl glycine. A helical transmembrane segment spans residues 7-27 (VESGALHVVIVGGGFGGIAAA). 6-hydroxy-FAD-binding positions include 18 to 22 (GGGFG), Arg-54, and Val-82. N6-acetyllysine; by KAT2B is present on Lys-168. Asp-285 lines the 6-hydroxy-FAD pocket.

It belongs to the FAD-dependent oxidoreductase family. As to quaternary structure, interacts with importin subunits KPNA2 and IPO5; this interaction likely mediates the translocation into the nucleus upon oxidative stress. It depends on 6-hydroxy-FAD as a cofactor. Post-translationally, N-myristoylation at Gly-2 mediates the recruitment to lipid droplets and plasma membrane, enabling its anti-lipid peroxidation activity. Acetylation at Lys-168 prevents AIFM2 ubiquitination and degradation, thereby inhibiting ferroptosis. KAT2B mediates acetylation at Lys-168, while HDAC3 removes it. In terms of processing, ubiquitinated. AIFM2 undergoes 'Lys-29'-ubiquitination and proteasomal degradation, which is inhibited by acetylation at Lys-168. In terms of tissue distribution, detected in most normal tissues as two transcripts of 1.8 and 4.0 kb in length, respectively. Highly expressed in heart, moderately in liver and skeletal muscles, and expressed at low levels in placenta, lung, kidney, and pancreas. Both transcripts expressed following p53/TP53 induction. The shorter 1.8 kb transcript seems to be the major transcript in EB1 colon cancer cells.

The protein localises to the lipid droplet. The protein resides in the cell membrane. It is found in the cytoplasm. Its subcellular location is the mitochondrion membrane. It localises to the nucleus. It carries out the reaction ubiquinone-10 + NADH + H(+) = ubiquinol-10 + NAD(+). The catalysed reaction is phylloquinone + NADH + H(+) = phylloquinol + NAD(+). It catalyses the reaction menaquinone-4 + NADH + H(+) = menaquinol-4 + NAD(+). The enzyme catalyses menadione + NADH + H(+) = menadiol + NAD(+). The modification by 4-hydroxy-2-nonenal (HNE) adduction in mitochondria results in loss of the oxidoreductase activity and activation of a novel function in mitochondrial oxidative stress signaling. Functionally, a NAD(P)H-dependent oxidoreductase that acts as a key inhibitor of ferroptosis. At the plasma membrane, catalyzes reduction of coenzyme Q/ubiquinone-10 to ubiquinol-10, a lipophilic radical-trapping antioxidant that prevents lipid oxidative damage and consequently ferroptosis. Acts in parallel to GPX4 to suppress phospholipid peroxidation and ferroptosis. This anti-ferroptotic function is independent of cellular glutathione levels. Also acts as a potent radical-trapping antioxidant by mediating warfarin-resistant vitamin K reduction in the canonical vitamin K cycle: catalyzes NAD(P)H-dependent reduction of vitamin K (phylloquinone, menaquinone-4 and menadione) to hydroquinone forms. Hydroquinones act as potent radical-trapping antioxidants inhibitor of phospholipid peroxidation and ferroptosis. May play a role in mitochondrial stress signaling. Upon oxidative stress, associates with the lipid peroxidation end product 4-hydroxy-2-nonenal (HNE) forming a lipid adduct devoid of oxidoreductase activity, which then translocates from mitochondria into the nucleus triggering DNA damage and cell death. Capable of DNA binding in a non-sequence specific way. The polypeptide is Ferroptosis suppressor protein 1 (Homo sapiens (Human)).